Consider the following 288-residue polypeptide: MFNFAKTAVLMAAITALFIVVGGMLGGEQGMLMALLMAVGMNFFSYWFSDTMVLKMTNAQQVDERSAPQFYALVRELSEKAGLPMPKVFLIDEDAPNAFATGRNPDNASVAATIGVLKILSNRELRGVMAHELAHVRHRDILISAVAATMAGAISALANFAMFFGGRDSEGRPNNPIASLMVAILAPIAASLIQMSISRAREYEADRGGAEISSDPEALAHALEKIHNYAQGTPFQAVEQHPETAQMMILNPLTAGGLAQLFSTHPPTEERVARLMHMAKNGEYPGAN.

2 helical membrane passes run 7-27 (TAVLMAAITALFIVVGGMLGG) and 29-49 (QGMLMALLMAVGMNFFSYWFS). Position 131 (His-131) interacts with Zn(2+). Glu-132 is an active-site residue. His-135 serves as a coordination point for Zn(2+). 2 helical membrane passes run 141 to 161 (ILISAVAATMAGAISALANFA) and 177 to 197 (IASLMVAILAPIAASLIQMSI). Glu-202 provides a ligand contact to Zn(2+).

It belongs to the peptidase M48B family. It depends on Zn(2+) as a cofactor.

It localises to the cell inner membrane. This is Protease HtpX homolog from Polynucleobacter necessarius subsp. necessarius (strain STIR1).